The following is a 57-amino-acid chain: Weak toxin CM-1b (57 aa).

4 disulfide bridges follow: Cys3/Cys19, Cys12/Cys37, Cys40/Cys49, and Cys50/Cys55.

Belongs to the three-finger toxin family. Short-chain subfamily. Orphan group XX sub-subfamily. Expressed by the venom gland.

The protein localises to the secreted. The protein is Weak toxin CM-1b of Hemachatus haemachatus (Rinkhals).